A 240-amino-acid polypeptide reads, in one-letter code: Uridylate kinase (240 aa).

13-16 (KISG) contributes to the ATP binding site. Gly55 contributes to the UMP binding site. Residues Gly56 and Arg60 each contribute to the ATP site. Residues Asp75 and 136 to 143 (TGNPFFTT) each bind UMP. ATP contacts are provided by Thr163, Gln164, Tyr169, and Asp172.

The protein belongs to the UMP kinase family. In terms of assembly, homohexamer.

The protein resides in the cytoplasm. It carries out the reaction UMP + ATP = UDP + ADP. The protein operates within pyrimidine metabolism; CTP biosynthesis via de novo pathway; UDP from UMP (UMPK route): step 1/1. Its activity is regulated as follows. Inhibited by UTP. Its function is as follows. Catalyzes the reversible phosphorylation of UMP to UDP. This chain is Uridylate kinase, found in Paramagnetospirillum magneticum (strain ATCC 700264 / AMB-1) (Magnetospirillum magneticum).